The following is a 171-amino-acid chain: MRIGLYPGTFDPVTLGHLDIIRRASTLVDRLVIGVAINRDKGPLFSLEERVAMLEAECAAVSAETGTEIVAHPFENLLIDCARDVGASMIIRGLRAVADFEYEFQMVGMNRRLDDSIETVFLMAEAEHQAIASKLVKEIARLGGDVTPFVTSQVRAALVDRFGPPQMNAAQ.

Thr9 provides a ligand contact to substrate. Residues 9-10 (TF) and His17 contribute to the ATP site. 3 residues coordinate substrate: Lys41, Leu78, and Arg92. ATP contacts are provided by residues 93-95 (GLR), Glu103, and 128-134 (HQAIASK).

The protein belongs to the bacterial CoaD family. In terms of assembly, homohexamer. Requires Mg(2+) as cofactor.

It is found in the cytoplasm. It catalyses the reaction (R)-4'-phosphopantetheine + ATP + H(+) = 3'-dephospho-CoA + diphosphate. It participates in cofactor biosynthesis; coenzyme A biosynthesis; CoA from (R)-pantothenate: step 4/5. Its function is as follows. Reversibly transfers an adenylyl group from ATP to 4'-phosphopantetheine, yielding dephospho-CoA (dPCoA) and pyrophosphate. This Dinoroseobacter shibae (strain DSM 16493 / NCIMB 14021 / DFL 12) protein is Phosphopantetheine adenylyltransferase.